The chain runs to 282 residues: 4-diphosphocytidyl-2-C-methyl-D-erythritol kinase (282 aa).

K13 is a catalytic residue. Residue 96 to 106 coordinates ATP; the sequence is PMGGGIGGGSS. D138 is a catalytic residue.

It belongs to the GHMP kinase family. IspE subfamily.

The catalysed reaction is 4-CDP-2-C-methyl-D-erythritol + ATP = 4-CDP-2-C-methyl-D-erythritol 2-phosphate + ADP + H(+). It functions in the pathway isoprenoid biosynthesis; isopentenyl diphosphate biosynthesis via DXP pathway; isopentenyl diphosphate from 1-deoxy-D-xylulose 5-phosphate: step 3/6. Functionally, catalyzes the phosphorylation of the position 2 hydroxy group of 4-diphosphocytidyl-2C-methyl-D-erythritol. This is 4-diphosphocytidyl-2-C-methyl-D-erythritol kinase from Pseudomonas syringae pv. tomato (strain ATCC BAA-871 / DC3000).